The following is a 762-amino-acid chain: Catalase-peroxidase (762 aa).

Residues 1 to 22 (MAEAKCPFSQSRSNANVAGGGT) form a disordered region. Residues 96–242 (WHSAGTYRVF…LAASHMGLIY (147 aa)) constitute a cross-link (tryptophyl-tyrosyl-methioninium (Trp-Tyr) (with M-268)). The active-site Proton acceptor is the H97. The segment at residues 242-268 (YVNPEGPDGNPDPVAAARDIRTTFGRM) is a cross-link (tryptophyl-tyrosyl-methioninium (Tyr-Met) (with W-96)). Residue H283 coordinates heme b.

The protein belongs to the peroxidase family. Peroxidase/catalase subfamily. Homodimer or homotetramer. Heme b is required as a cofactor. In terms of processing, formation of the three residue Trp-Tyr-Met cross-link is important for the catalase, but not the peroxidase activity of the enzyme.

The protein resides in the cytoplasm. It catalyses the reaction H2O2 + AH2 = A + 2 H2O. The catalysed reaction is 2 H2O2 = O2 + 2 H2O. In terms of biological role, bifunctional enzyme with both catalase and broad-spectrum peroxidase activity. The polypeptide is Catalase-peroxidase (Aspergillus niger (strain ATCC MYA-4892 / CBS 513.88 / FGSC A1513)).